A 417-amino-acid chain; its full sequence is Mast cell carboxypeptidase A (417 aa).

Positions Met1–Ala15 are cleaved as a signal peptide. Residues Ile16–Asp109 constitute a propeptide, activation peptide. One can recognise a Peptidase M14 domain in the interval Lys118–Ile412. Intrachain disulfides connect Cys173/Cys186 and Cys245/Cys268. His176 and Glu179 together coordinate Zn(2+). His304 contacts Zn(2+). The active-site Proton donor/acceptor is Glu378.

Belongs to the peptidase M14 family. Requires Zn(2+) as cofactor.

It localises to the cytoplasmic vesicle. The protein resides in the secretory vesicle. The catalysed reaction is Release of a C-terminal amino acid, but little or no action with -Asp, -Glu, -Arg, -Lys or -Pro.. The sequence is that of Mast cell carboxypeptidase A (CPA3) from Homo sapiens (Human).